A 315-amino-acid polypeptide reads, in one-letter code: Putative protein phosphatase 2C 24 (315 aa).

The PPM-type phosphatase domain maps to 71 to 314 (ALRMEAASCF…DDITVVVAYI (244 aa)). D102, G103, D238, and D305 together coordinate Mn(2+).

This sequence belongs to the PP2C family. Mg(2+) serves as cofactor. The cofactor is Mn(2+).

The catalysed reaction is O-phospho-L-seryl-[protein] + H2O = L-seryl-[protein] + phosphate. It carries out the reaction O-phospho-L-threonyl-[protein] + H2O = L-threonyl-[protein] + phosphate. The chain is Putative protein phosphatase 2C 24 from Oryza sativa subsp. japonica (Rice).